The chain runs to 524 residues: Zinc finger protein 346 (524 aa).

Matrin-type zinc fingers lie at residues 34–64 (TQCK…KVRR), 92–126 (DRSK…LRLR), 162–192 (KFCK…QETK), 226–260 (GKGF…LMSM), 286–316 (FSCD…HLKS), 343–373 (FSCD…HLMS), and 400–430 (FSCD…QLMS). The Zn(2+) site is built by C36, C39, H52, H58, C97, C100, H113, and H119. Disordered stretches follow at residues 453-486 (SAGG…GSLP) and 494-513 (PLYP…TMSP). Over residues 476–486 (PKGPSSFGSLP) the composition is skewed to low complexity.

The protein localises to the nucleus. Its subcellular location is the cytoplasm. Functionally, binds preferentially to dsRNA, but also to RNA-DNA hybrids. The protein is Zinc finger protein 346 of Xenopus laevis (African clawed frog).